The chain runs to 537 residues: Phosphoenolpyruvate carboxykinase (ATP) (537 aa).

Residues Arg61, Tyr195, and Lys201 each coordinate substrate. ATP is bound by residues Lys201, His220, and 236-244 (GLSGTGKTT). Mn(2+) contacts are provided by Lys201 and His220. Mn(2+) is bound at residue Asp257. Residues Glu285, Arg323, and Thr448 each contribute to the ATP site. A substrate-binding site is contributed by Arg323.

Belongs to the phosphoenolpyruvate carboxykinase (ATP) family. Mn(2+) is required as a cofactor.

It is found in the cytoplasm. It carries out the reaction oxaloacetate + ATP = phosphoenolpyruvate + ADP + CO2. Its pathway is carbohydrate biosynthesis; gluconeogenesis. Involved in the gluconeogenesis. Catalyzes the conversion of oxaloacetate (OAA) to phosphoenolpyruvate (PEP) through direct phosphoryl transfer between the nucleoside triphosphate and OAA. The sequence is that of Phosphoenolpyruvate carboxykinase (ATP) from Azorhizobium caulinodans (strain ATCC 43989 / DSM 5975 / JCM 20966 / LMG 6465 / NBRC 14845 / NCIMB 13405 / ORS 571).